The following is a 56-amino-acid chain: Bdellin B-3 (56 aa).

One can recognise a Kazal-like domain in the interval 1-42; it reads DTECVCTKELHRVCGSDGVTYDNECLATCHGASVAHDHACEG. 3 cysteine pairs are disulfide-bonded: Cys4–Cys29, Cys6–Cys25, and Cys14–Cys40.

Functionally, proteinase inhibitor. Blocks the activity of trypsin, plasmin and sperm acrosin. The protein is Bdellin B-3 of Hirudo medicinalis (Medicinal leech).